Here is a 713-residue protein sequence, read N- to C-terminus: Probable muscarinic acetylcholine receptor gar-1 (713 aa).

At 1 to 20 the chain is on the extracellular side; the sequence is MPNYTVPPDPADTSWDSPYS. Asparagine 3 is a glycosylation site (N-linked (GlcNAc...) asparagine). A helical membrane pass occupies residues 21 to 41; the sequence is IPVQIVVWIIIIVLSLETIIG. The Cytoplasmic portion of the chain corresponds to 42–66; the sequence is NAMVVMAYRIERNISKQVSNRYIVS. A helical transmembrane segment spans residues 67–87; the sequence is LAISDLIIGIEGFPFFTVYVL. Residues 88 to 101 lie on the Extracellular side of the membrane; that stretch reads NGDRWPLGWVACQT. Cysteines 99 and 180 form a disulfide. A helical membrane pass occupies residues 102 to 122; sequence WLFLDYTLCLVSILTVLLITA. At 123–144 the chain is on the cytoplasmic side; that stretch reads DRYLSVCHTAKYLKWQSPTKTQ. Residues 145–165 form a helical membrane-spanning segment; it reads LLIVMSWLLPAIIFGIMIYGW. Over 166-189 the chain is Extracellular; that stretch reads QAMTGQSTSMSGAECSAPFLSNPY. The helical transmembrane segment at 190 to 210 threads the bilayer; it reads VNMGMYVAYYWTTLVAMLILY. Over 211–633 the chain is Cytoplasmic; that stretch reads KGIHQAAKNL…QTKAEKRAHK (423 aa). Disordered regions lie at residues 256–350, 381–403, 427–475, and 515–585; these read KEKA…SRRC, SRYS…VEKA, KNTD…KQAE, and LIRR…TDTF. Composition is skewed to polar residues over residues 266–275 and 287–315; these read SGYTSNQAGD and PETS…NDQN. 2 stretches are compositionally biased toward basic and acidic residues: residues 320-333 and 393-403; these read EEER…RESN and HENDEKEVEKA. Positions 429–439 are enriched in low complexity; the sequence is TDSNNDSDTTS. Positions 444–457 are enriched in basic residues; it reads RSRKYKKNKRPRSS. The span at 557-571 shows a compositional bias: polar residues; sequence LTVNNENRGETSSQP. Residues 634–656 form a helical membrane-spanning segment; the sequence is AFRTITFIVGFFAILWSPYYIMA. At 657–670 the chain is on the extracellular side; it reads TVYGFCKGECIPSF. The helical transmembrane segment at 671 to 693 threads the bilayer; sequence LYTLSYYMCYLNSSGNPFAYALA. The Cytoplasmic portion of the chain corresponds to 694 to 713; sequence NRQFRSAFMRMFRGNFNKVA.

This sequence belongs to the G-protein coupled receptor 1 family. Muscarinic acetylcholine receptor subfamily. As to expression, expressed in head region of the larva. In adults, expression is seen in the periventricularis magnocellularis (PVM) neuron.

It localises to the cell membrane. Its function is as follows. The muscarinic acetylcholine receptor mediates various cellular responses, including inhibition of adenylate cyclase, breakdown of phosphoinositides and modulation of potassium channels through the action of G proteins. Primary transducing effect is Pi turnover. The polypeptide is Probable muscarinic acetylcholine receptor gar-1 (gar-1) (Caenorhabditis elegans).